A 1039-amino-acid chain; its full sequence is Error-prone DNA polymerase (1039 aa).

It belongs to the DNA polymerase type-C family. DnaE2 subfamily.

It is found in the cytoplasm. It catalyses the reaction DNA(n) + a 2'-deoxyribonucleoside 5'-triphosphate = DNA(n+1) + diphosphate. In terms of biological role, DNA polymerase involved in damage-induced mutagenesis and translesion synthesis (TLS). It is not the major replicative DNA polymerase. In Corynebacterium diphtheriae (strain ATCC 700971 / NCTC 13129 / Biotype gravis), this protein is Error-prone DNA polymerase.